Consider the following 60-residue polypeptide: Arabinogalactan protein 12 (60 aa).

The first 27 residues, 1–27, serve as a signal peptide directing secretion; that stretch reads MESMKMKLIVVLMVAIVAFSAVGNVAA. Gln-28 bears the Pyrrolidone carboxylic acid mark. 3 positions are modified to 4-hydroxyproline: Pro-32, Pro-34, and Pro-36. O-linked (Ara...) hydroxyproline glycosylation is found at Pro-32, Pro-34, and Pro-36. Ser-38 carries GPI-anchor amidated serine lipidation. A propeptide spans 39 to 60 (removed in mature form); the sequence is DAAMFVPALFASVAALASGFLF.

Belongs to the AG-peptide AGP family. Post-translationally, contains 4-hydroxyproline; hydroxylated on Pro-32, Pro-34 and Pro-36. In terms of processing, O-glycosylated on hydroxyprolines; noncontiguous hydroxylproline residues are glycosylated with arabinogalactan. As to expression, expressed in reproductive tissues. Expressed in chalaza, funiculus, stigma, septum, style and transmitting tract.

Its subcellular location is the cell membrane. In terms of biological role, proteoglycan that seems to be implicated in diverse developmental roles such as differentiation, cell-cell recognition, embryogenesis and programmed cell death. This Arabidopsis thaliana (Mouse-ear cress) protein is Arabinogalactan protein 12.